Reading from the N-terminus, the 565-residue chain is Oxygen-dependent choline dehydrogenase (565 aa).

6 to 35 (DYIIIGAGSAGNVLATRLTEDADVSVLLLE) serves as a coordination point for FAD. The active-site Proton acceptor is the histidine 475. The disordered stretch occupies residues 541–565 (RSNAPYFVAGERPVRGQPQRAVSAA).

Belongs to the GMC oxidoreductase family. Requires FAD as cofactor.

It catalyses the reaction choline + A = betaine aldehyde + AH2. The catalysed reaction is betaine aldehyde + NAD(+) + H2O = glycine betaine + NADH + 2 H(+). It participates in amine and polyamine biosynthesis; betaine biosynthesis via choline pathway; betaine aldehyde from choline (cytochrome c reductase route): step 1/1. In terms of biological role, involved in the biosynthesis of the osmoprotectant glycine betaine. Catalyzes the oxidation of choline to betaine aldehyde and betaine aldehyde to glycine betaine at the same rate. This is Oxygen-dependent choline dehydrogenase from Ectopseudomonas mendocina (strain ymp) (Pseudomonas mendocina).